The primary structure comprises 293 residues: uncharacterized protein (293 aa).

The active site involves Asp119.

The protein belongs to the pseudouridine synthase RluA family.

The enzyme catalyses a uridine in RNA = a pseudouridine in RNA. This is an uncharacterized protein from Helicobacter pylori (strain J99 / ATCC 700824) (Campylobacter pylori J99).